Here is a 172-residue protein sequence, read N- to C-terminus: Large ribosomal subunit protein uL10 (172 aa).

Belongs to the universal ribosomal protein uL10 family. Part of the ribosomal stalk of the 50S ribosomal subunit. The N-terminus interacts with L11 and the large rRNA to form the base of the stalk. The C-terminus forms an elongated spine to which L12 dimers bind in a sequential fashion forming a multimeric L10(L12)X complex.

Its function is as follows. Forms part of the ribosomal stalk, playing a central role in the interaction of the ribosome with GTP-bound translation factors. The sequence is that of Large ribosomal subunit protein uL10 from Chlamydia trachomatis serovar A (strain ATCC VR-571B / DSM 19440 / HAR-13).